The sequence spans 780 residues: ATP-dependent 6-phosphofructokinase, liver type (780 aa).

Ala2 carries the post-translational modification N-acetylalanine. The interval 2–390 (ATVDLEKLRM…NWKIYKLLAH (389 aa)) is N-terminal catalytic PFK domain 1. Residues Gly25, 88–89 (RC), and 118–121 (GDGS) each bind ATP. Asp119 contacts Mg(2+). Substrate contacts are provided by residues 164–166 (SID), Arg201, 208–210 (MGR), Glu264, Arg292, and 298–301 (HVQR). The active-site Proton acceptor is Asp166. Ser377 is subject to Phosphoserine. The tract at residues 391–400 (QKVSKEKSNF) is interdomain linker. The segment at 401-780 (SLAILNVGAP…RRTLSIDKGF (380 aa)) is C-terminal regulatory PFK domain 2. Residues Arg470, 527–531 (TISNN), Arg565, 572–574 (MGG), and Glu628 each bind beta-D-fructose 2,6-bisphosphate. Ser529 carries O-linked (GlcNAc) serine glycosylation. Position 640 is a phosphotyrosine (Tyr640). Beta-D-fructose 2,6-bisphosphate-binding positions include Arg654, 660–663 (HLQQ), and Arg734. Ser775 is modified (phosphoserine).

The protein belongs to the phosphofructokinase type A (PFKA) family. ATP-dependent PFK group I subfamily. Eukaryotic two domain clade 'E' sub-subfamily. In terms of assembly, homo- and heterotetramers. Phosphofructokinase (PFK) enzyme functions as a tetramer composed of different combinations of 3 types of subunits, called PFKM (M), PFKL (L) and PFKP (P). The composition of the PFK tetramer differs according to the tissue type it is present in. The kinetic and regulatory properties of the tetrameric enzyme are dependent on the subunit composition, hence can vary across tissues. Requires Mg(2+) as cofactor. In terms of processing, glcNAcylation at Ser-529 by OGT decreases enzyme activity, leading to redirect glucose flux through the oxidative pentose phosphate pathway. Glycosylation is stimulated by both hypoxia and glucose deprivation.

Its subcellular location is the cytoplasm. It carries out the reaction beta-D-fructose 6-phosphate + ATP = beta-D-fructose 1,6-bisphosphate + ADP + H(+). The protein operates within carbohydrate degradation; glycolysis; D-glyceraldehyde 3-phosphate and glycerone phosphate from D-glucose: step 3/4. Its activity is regulated as follows. Allosterically activated by ADP, AMP, or fructose 2,6-bisphosphate, and allosterically inhibited by ATP or citrate. GlcNAcylation by OGT overcomes allosteric regulation. Catalyzes the phosphorylation of D-fructose 6-phosphate to fructose 1,6-bisphosphate by ATP, the first committing step of glycolysis. Negatively regulates the phagocyte oxidative burst in response to bacterial infection by controlling cellular NADPH biosynthesis and NADPH oxidase-derived reactive oxygen species. Upon macrophage activation, drives the metabolic switch toward glycolysis, thus preventing glucose turnover that produces NADPH via pentose phosphate pathway. In Rattus norvegicus (Rat), this protein is ATP-dependent 6-phosphofructokinase, liver type (Pfkl).